The following is a 143-amino-acid chain: Large ribosomal subunit protein uL15 (143 aa).

The segment at Met1–Arg59 is disordered. Over residues Arg21–Ala31 the composition is skewed to gly residues.

Belongs to the universal ribosomal protein uL15 family. As to quaternary structure, part of the 50S ribosomal subunit.

Binds to the 23S rRNA. The sequence is that of Large ribosomal subunit protein uL15 from Polaromonas sp. (strain JS666 / ATCC BAA-500).